The sequence spans 317 residues: N-acetylmuramoyl-L-alanine amidase XlyB (317 aa).

The N-terminal stretch at Met-1 to Ala-39 is a signal peptide. Residues Ala-40–His-142 enclose the N-acetylmuramoyl-L-alanine amidase domain. Residues Ser-177–Leu-221 form the LysM domain.

This sequence belongs to the N-acetylmuramoyl-L-alanine amidase 2 family.

It localises to the secreted. It catalyses the reaction Hydrolyzes the link between N-acetylmuramoyl residues and L-amino acid residues in certain cell-wall glycopeptides.. Autolysins are involved in some important biological processes such as cell separation, cell-wall turnover, competence for genetic transformation, formation of the flagella and sporulation. The protein is N-acetylmuramoyl-L-alanine amidase XlyB (xlyB) of Bacillus subtilis (strain 168).